The sequence spans 132 residues: MAKLSTDELLEAFKDLTLIELSEFVKKFEETFEVTAAAPPVAVAAAPAAGGAGAAAEDAEQKDSFDIVLESVDASKKIQVIKEVRALTSLGLGEAKALVDGAPSTVLEGANKEAADKAKTQLEGAGGTINLK.

The segment at lysine 112–lysine 132 is disordered.

Belongs to the bacterial ribosomal protein bL12 family. In terms of assembly, homodimer. Part of the ribosomal stalk of the 50S ribosomal subunit. Forms a multimeric L10(L12)X complex, where L10 forms an elongated spine to which 2 to 4 L12 dimers bind in a sequential fashion. Binds GTP-bound translation factors.

Its function is as follows. Forms part of the ribosomal stalk which helps the ribosome interact with GTP-bound translation factors. Is thus essential for accurate translation. This chain is Large ribosomal subunit protein bL12, found in Leifsonia xyli subsp. xyli (strain CTCB07).